A 295-amino-acid chain; its full sequence is MAWIQIRLNSTNEKAEQMSDFLEEIGSVSVTFMDSQDTPIFEPLPGETRLWGNTDVIALFDAETDMAEIVRLLKEAKHLDSNTAYKIEQIEDKDWEREWMDNFHPMQFGKRLWICPSWRDVPDENAVNVMLDPGLAFGTGTHPTTALCLEWLDGLDLKDKSVIDFGCGSGILAIAALKLGAKSAVGIDIDPQAILASRNNAEQNGVADRLQLFLSDEKPSDLKADVVVANILAGPLKELYPIISQLVKPNGDLGLSGILETQAQSVCDAYTQTFALEPVAAREEWCRITGKLKTL.

Positions 145, 166, 188, and 230 each coordinate S-adenosyl-L-methionine.

The protein belongs to the methyltransferase superfamily. PrmA family.

The protein localises to the cytoplasm. The catalysed reaction is L-lysyl-[protein] + 3 S-adenosyl-L-methionine = N(6),N(6),N(6)-trimethyl-L-lysyl-[protein] + 3 S-adenosyl-L-homocysteine + 3 H(+). In terms of biological role, methylates ribosomal protein L11. This is Ribosomal protein L11 methyltransferase from Haemophilus influenzae (strain PittEE).